We begin with the raw amino-acid sequence, 331 residues long: MIRSATLPFASALPSLPDNHRLRLFSGSSNSALSQEVSRYLGIDLGPMIRKRFADGELYVQIQESIRGCDVYLMQPTCWPVNDHLMELLIMIDACRRASARQITAVLPYYGYARADRKTAGRESITAKLVANLITQAGANRVLAMDLHSAQIQGYFDIPFDHVYGSPVLIDYLRSKNLADLVVVSPDVGGVARARAFAKKLDDAPLAIIDKRRQAHNVAEVLNVIGDVQGKTAVLVDDMIDTAGTICEGARLLRKQGASQVYACATHAVFSPPAIERLSASGLFEEVIVTNTIPIPEENRFPQLTILSVANLLGETIWRIHEESSVSSMFR.

ATP is bound at residue 55–57; sequence DGE. Residues His148 and Asp187 each coordinate Mg(2+). The active site involves Lys211. Residues Arg213, Asp237, and 241–245 each bind D-ribose 5-phosphate; that span reads DTAGT.

Belongs to the ribose-phosphate pyrophosphokinase family. Class I subfamily. As to quaternary structure, homohexamer. Requires Mg(2+) as cofactor.

It is found in the cytoplasm. It catalyses the reaction D-ribose 5-phosphate + ATP = 5-phospho-alpha-D-ribose 1-diphosphate + AMP + H(+). Its pathway is metabolic intermediate biosynthesis; 5-phospho-alpha-D-ribose 1-diphosphate biosynthesis; 5-phospho-alpha-D-ribose 1-diphosphate from D-ribose 5-phosphate (route I): step 1/1. In terms of biological role, involved in the biosynthesis of the central metabolite phospho-alpha-D-ribosyl-1-pyrophosphate (PRPP) via the transfer of pyrophosphoryl group from ATP to 1-hydroxyl of ribose-5-phosphate (Rib-5-P). The sequence is that of Ribose-phosphate pyrophosphokinase from Synechococcus elongatus (strain ATCC 33912 / PCC 7942 / FACHB-805) (Anacystis nidulans R2).